Consider the following 196-residue polypeptide: Large ribosomal subunit protein bL9 (196 aa).

Positions 172–196 (NESARPEAFFDPEAEIEQEEGEENA) are disordered. The segment covering 181–196 (FDPEAEIEQEEGEENA) has biased composition (acidic residues).

It belongs to the bacterial ribosomal protein bL9 family.

Its function is as follows. Binds to the 23S rRNA. The sequence is that of Large ribosomal subunit protein bL9 from Chelativorans sp. (strain BNC1).